The sequence spans 226 residues: Ribonuclease 3 (226 aa).

One can recognise an RNase III domain in the interval 6 to 128; that stretch reads INRLQRKLGY…LIGGIFLDSD (123 aa). A Mg(2+)-binding site is contributed by Glu-41. Asp-45 is a catalytic residue. Mg(2+) is bound by residues Asp-114 and Glu-117. Glu-117 is a catalytic residue. One can recognise a DRBM domain in the interval 155 to 225; sequence DPKTRLQEFL…AEQALKKLEL (71 aa).

It belongs to the ribonuclease III family. As to quaternary structure, homodimer. It depends on Mg(2+) as a cofactor.

It is found in the cytoplasm. The catalysed reaction is Endonucleolytic cleavage to 5'-phosphomonoester.. Digests double-stranded RNA. Involved in the processing of primary rRNA transcript to yield the immediate precursors to the large and small rRNAs (23S and 16S). Processes some mRNAs, and tRNAs when they are encoded in the rRNA operon. Processes pre-crRNA and tracrRNA of type II CRISPR loci if present in the organism. The protein is Ribonuclease 3 of Pectobacterium carotovorum subsp. carotovorum (strain PC1).